We begin with the raw amino-acid sequence, 395 residues long: uncharacterized protein (395 aa).

Residues 286–306 show a composition bias toward low complexity; sequence SSNKSSESTMTSPLDSASSLH. The disordered stretch occupies residues 286–395; that stretch reads SSNKSSESTM…RNDDSGLESV (110 aa). Pro residues predominate over residues 350–362; the sequence is RPPPPSVHPPIFP. Over residues 364–385 the composition is skewed to polar residues; sequence QTQLFHPPTYSTQRHVTSPNSS.

This is an uncharacterized protein from Caenorhabditis elegans.